Reading from the N-terminus, the 937-residue chain is Isoleucine--tRNA ligase (937 aa).

A 'HIGH' region motif is present at residues P57–H67. Residue E556 coordinates L-isoleucyl-5'-AMP. The 'KMSKS' region motif lies at K597 to S601. K600 contacts ATP. Residues C895, C898, C915, and C918 each contribute to the Zn(2+) site.

Belongs to the class-I aminoacyl-tRNA synthetase family. IleS type 1 subfamily. Monomer. It depends on Zn(2+) as a cofactor.

It is found in the cytoplasm. The catalysed reaction is tRNA(Ile) + L-isoleucine + ATP = L-isoleucyl-tRNA(Ile) + AMP + diphosphate. In terms of biological role, catalyzes the attachment of isoleucine to tRNA(Ile). As IleRS can inadvertently accommodate and process structurally similar amino acids such as valine, to avoid such errors it has two additional distinct tRNA(Ile)-dependent editing activities. One activity is designated as 'pretransfer' editing and involves the hydrolysis of activated Val-AMP. The other activity is designated 'posttransfer' editing and involves deacylation of mischarged Val-tRNA(Ile). This Levilactobacillus brevis (strain ATCC 367 / BCRC 12310 / CIP 105137 / JCM 1170 / LMG 11437 / NCIMB 947 / NCTC 947) (Lactobacillus brevis) protein is Isoleucine--tRNA ligase.